The sequence spans 977 residues: Serine/threonine-protein kinase/endoribonuclease IRE1 (977 aa).

The signal sequence occupies residues 1-20 (MPARWLLLLLALLLPPPGPG). The Lumenal segment spans residues 21-445 (SFGRTSTVTL…EAPVDSMLKD (425 aa)). The N-linked (GlcNAc...) asparagine glycan is linked to asparagine 178. A helical transmembrane segment spans residues 446-466 (MATIILSTFLLVGWVAFIITY). At 467–977 (PLSVHQQRQL…PQPPVIPYAL (511 aa)) the chain is on the cytoplasmic side. Residues 498–559 (FHPHGDLTQD…PSLEQDDEDE (62 aa)) form a disordered region. The span at 513 to 551 (SSGPFSESSGTSSPSPSPRASNHSLHPSSSASRAGTSPS) shows a compositional bias: low complexity. A Protein kinase domain is found at 571 to 832 (FCPKDVLGHG…AKHVLKHPFF (262 aa)). Residues 577–585 (LGHGAEGTI), lysine 599, and 643–645 (ELC) contribute to the ATP site. Aspartate 688 (proton acceptor; for protein kinase activity) is an active-site residue. Residues 690–693 (KPHN) and aspartate 711 each bind ATP. 2 positions are modified to phosphoserine: serine 724 and serine 729. Positions 835-963 (LEKQLQFFQD…ERLFQTYYWH (129 aa)) constitute a KEN domain. The segment at 906-907 (NK) is interacts with hydroxy-aryl-aldehyde inhibitors.

Belongs to the protein kinase superfamily. Ser/Thr protein kinase family. As to quaternary structure, monomer. Homodimer; disulfide-linked; homodimerization takes place in response to endoplasmic reticulum stress and promotes activation of the kinase and endoribonuclease activities. Dimer formation is driven by hydrophobic interactions within the N-terminal luminal domains and stabilized by disulfide bridges. Interacts (via the luminal region) with DNAJB9/ERdj4; interaction takes place in unstressed cells and promotes recruitment of HSPA5/BiP. Interacts (via the luminal region) with HSPA5/BiP; HSPA5/BiP is a negative regulator of the unfolded protein response (UPR) that prevents homodimerization of ERN1/IRE1 and subsequent activation of the protein. Interaction with HSPA5 also competitively inhibits ERN1 interaction with MANF. Interacts with PDIA6, a negative regulator of the UPR; the interaction is direct and disrupts homodimerization. Interacts with DAB2IP (via PH domain); the interaction occurs in a endoplasmic reticulum stress-induced dependent manner and is required for subsequent recruitment of TRAF2 to ERN1/IRE1. Interacts with TAOK3 and TRAF2. Interacts with RNF13. Interacts with LACC1. Interacts (when unphosphorylated) with DDRGK1; interaction is dependent on UFM1 and takes place in response to endoplasmic reticulum stress, regulating ERN1/IRE1-alpha stability. Interacts (via N-terminus) with P4HB/PDIA1; the interaction is enhanced by phosphorylation of P4HB by FAM20C in response to endoplasmic reticulum stress and results in attenuation of ERN1 activity. Interacts with TMBIM6; this interaction inhibits ERN1 activity. Interacts (via luminal domain) with MANF (via C-terminus); the interaction is decreased in the presence of increasing concentrations of Ca(2+). Mg(2+) serves as cofactor. Autophosphorylated following homodimerization. Autophosphorylation promotes activation of the endoribonuclease domain. In response to ER stress, phosphorylated at Ser-724, Ser-729 and possibly Ser-726; phosphorylation promotes oligomerization and endoribonuclease activity. Dephosphorylated at Ser-724, Ser-729 and possibly Ser-726 by RPAP2 to abort failed ER-stress adaptation and trigger apoptosis. Phosphorylated at Ser-724; in response to the ER stressor tunicamycin. Post-translationally, ADP-ribosylated by PARP16 upon ER stress, which increases both kinase and endonuclease activities. Expressed in liver (at protein level). Ubiquitously expressed. High levels in thymus, liver and lung. In the brain, preferentially expressed in cortical, hippocampal and olfactory neurons.

Its subcellular location is the endoplasmic reticulum membrane. The enzyme catalyses L-seryl-[protein] + ATP = O-phospho-L-seryl-[protein] + ADP + H(+). The catalysed reaction is L-threonyl-[protein] + ATP = O-phospho-L-threonyl-[protein] + ADP + H(+). The kinase domain is activated by trans-autophosphorylation following homodimerization. Kinase activity is required for activation of the endoribonuclease domain. Endoribonuclease activity is specifically inhibited by hydroxy-aryl-aldehydes (HAA) MKC9989, OICR464 and OICR573. In terms of biological role, serine/threonine-protein kinase and endoribonuclease that acts as a key sensor for the endoplasmic reticulum unfolded protein response (UPR). In unstressed cells, the endoplasmic reticulum luminal domain is maintained in its inactive monomeric state by binding to the endoplasmic reticulum chaperone HSPA5/BiP. Accumulation of misfolded protein in the endoplasmic reticulum causes release of HSPA5/BiP, allowing the luminal domain to homodimerize, promoting autophosphorylation of the kinase domain and subsequent activation of the endoribonuclease activity. The endoribonuclease activity is specific for XBP1 mRNA and excises 26 nucleotides from XBP1 mRNA. The resulting spliced transcript of XBP1 encodes a transcriptional activator protein that up-regulates expression of UPR target genes. Acts as an upstream signal for ER stress-induced GORASP2-mediated unconventional (ER/Golgi-independent) trafficking of CFTR to cell membrane by modulating the expression and localization of SEC16A. The polypeptide is Serine/threonine-protein kinase/endoribonuclease IRE1 (Mus musculus (Mouse)).